Consider the following 302-residue polypeptide: GrpE protein homolog 1, mitochondrial (302 aa).

The transit peptide at 1–39 directs the protein to the mitochondrion; sequence MLVSRVLSRVSRSAGLRSSFSSVVTPKRNQIPIVASRFH. The tract at residues 77–97 is disordered; it reads SAEPKGNESNTEVPKTGETSE.

The protein belongs to the GrpE family. Probable component of the PAM complex, at least composed of SSC1 (mtHsp70), MGE1, TIM44, PAM16/TIM16, PAM17 and PAM18/TIM14. Interacts with SSQ1.

Its subcellular location is the mitochondrion matrix. Its function is as follows. Essential component of the PAM complex, a complex required for the translocation of transit peptide-containing proteins from the inner membrane into the mitochondrial matrix in an ATP-dependent manner. Seems to control the nucleotide-dependent binding of mitochondrial HSP70 to substrate proteins. Binds ATP. Interacts with copper ions Cu(2+). The sequence is that of GrpE protein homolog 1, mitochondrial from Arabidopsis thaliana (Mouse-ear cress).